The primary structure comprises 199 residues: Protein-methionine-sulfoxide reductase heme-binding subunit MsrQ (199 aa).

5 helical membrane passes run isoleucine 8–tryptophan 28, leucine 82–isoleucine 102, proline 116–threonine 136, phenylalanine 149–valine 169, and isoleucine 171–tyrosine 191.

The protein belongs to the MsrQ family. In terms of assembly, heterodimer of a catalytic subunit (MsrP) and a heme-binding subunit (MsrQ). It depends on FMN as a cofactor. Heme b serves as cofactor.

Its subcellular location is the cell inner membrane. Part of the MsrPQ system that repairs oxidized periplasmic proteins containing methionine sulfoxide residues (Met-O), using respiratory chain electrons. Thus protects these proteins from oxidative-stress damage caused by reactive species of oxygen and chlorine generated by the host defense mechanisms. MsrPQ is essential for the maintenance of envelope integrity under bleach stress, rescuing a wide series of structurally unrelated periplasmic proteins from methionine oxidation. MsrQ provides electrons for reduction to the reductase catalytic subunit MsrP, using the quinone pool of the respiratory chain. The polypeptide is Protein-methionine-sulfoxide reductase heme-binding subunit MsrQ (Enterobacter sp. (strain 638)).